The sequence spans 381 residues: Alkanesulfonate monooxygenase (381 aa).

Belongs to the SsuD family. In terms of assembly, homotetramer.

The enzyme catalyses an alkanesulfonate + FMNH2 + O2 = an aldehyde + FMN + sulfite + H2O + 2 H(+). Its function is as follows. Catalyzes the desulfonation of aliphatic sulfonates. This Cronobacter sakazakii (strain ATCC BAA-894) (Enterobacter sakazakii) protein is Alkanesulfonate monooxygenase.